The chain runs to 352 residues: Alanine racemase (352 aa).

The active-site Proton acceptor; specific for D-alanine is the Lys-33. Lys-33 carries the N6-(pyridoxal phosphate)lysine modification. Residue Arg-129 coordinates substrate. The active-site Proton acceptor; specific for L-alanine is Tyr-250. Met-298 contributes to the substrate binding site.

It belongs to the alanine racemase family. The cofactor is pyridoxal 5'-phosphate.

It carries out the reaction L-alanine = D-alanine. It functions in the pathway amino-acid biosynthesis; D-alanine biosynthesis; D-alanine from L-alanine: step 1/1. Its function is as follows. Catalyzes the interconversion of L-alanine and D-alanine. May also act on other amino acids. The chain is Alanine racemase (alr) from Neisseria meningitidis serogroup A / serotype 4A (strain DSM 15465 / Z2491).